A 293-amino-acid polypeptide reads, in one-letter code: Large ribosomal RNA subunit accumulation protein YCED homolog 1, chloroplastic (293 aa).

The transit peptide at 1-42 directs the protein to the chloroplast; it reads MYYPQPTVSLAAAVALLRPSLRRHSQRASSLLRSSTPPPWVS.

It belongs to the DUF177 domain family. In terms of tissue distribution, highly expressed in shoots and leaves. Detected in roots, embryos and endosperm.

It localises to the plastid. The protein localises to the chloroplast. Its function is as follows. Plays a role in synthesis, processing and/or stability of 23S rRNA. Required for embryogenesis. May be involved in RPL23 transcript levels regulation in non-photosynthetic plastids. This Zea mays (Maize) protein is Large ribosomal RNA subunit accumulation protein YCED homolog 1, chloroplastic.